Consider the following 355-residue polypeptide: Erythronate-4-phosphate dehydrogenase (355 aa).

Substrate-binding residues include S45 and T66. D146 provides a ligand contact to NAD(+). The active site involves R206. NAD(+) is bound at residue D229. E234 is an active-site residue. The Proton donor role is filled by H251. Residue G254 participates in NAD(+) binding. Substrate is bound at residue Y255.

The protein belongs to the D-isomer specific 2-hydroxyacid dehydrogenase family. PdxB subfamily. In terms of assembly, homodimer.

The protein localises to the cytoplasm. The enzyme catalyses 4-phospho-D-erythronate + NAD(+) = (R)-3-hydroxy-2-oxo-4-phosphooxybutanoate + NADH + H(+). It participates in cofactor biosynthesis; pyridoxine 5'-phosphate biosynthesis; pyridoxine 5'-phosphate from D-erythrose 4-phosphate: step 2/5. Catalyzes the oxidation of erythronate-4-phosphate to 3-hydroxy-2-oxo-4-phosphonooxybutanoate. In Acinetobacter baumannii (strain ATCC 17978 / DSM 105126 / CIP 53.77 / LMG 1025 / NCDC KC755 / 5377), this protein is Erythronate-4-phosphate dehydrogenase.